The primary structure comprises 202 residues: Cryptic protein (202 aa).

Positions 1–35 (MRANSPTQGISLKMHQARPLFLVTVALQLIGLGYS) are cleaved as a signal peptide. Residue asparagine 65 is glycosylated (N-linked (GlcNAc...) asparagine). Residues 94–123 (PVSRCCHNGGTCVLGSFCVCPAYFTGRYCE) form the EGF-like domain. 3 disulfide bridges follow: cysteine 98-cysteine 105, cysteine 99-cysteine 111, and cysteine 113-cysteine 122. Aspartate 166 carries GPI-anchor amidated aspartate lipidation. Positions 167–202 (LKSFLSSGARGSRECSIPSLLLLVLCLLLQGVAGKG) are cleaved as a propeptide — removed in mature form.

This sequence belongs to the EGF-CFC (Cripto-1/FRL1/Cryptic) family. N-glycosylated. In terms of tissue distribution, no expressed in adult tissues.

It is found in the cell membrane. The protein resides in the secreted. In terms of biological role, nodal coreceptor involved in the correct establishment of the left-right axis. May play a role in mesoderm and/or neural patterning during gastrulation. This Mus musculus (Mouse) protein is Cryptic protein (Cfc1).